A 302-amino-acid chain; its full sequence is Methylsterol monooxygenase erg25A (302 aa).

Asn5 carries N-linked (GlcNAc...) asparagine glycosylation. 3 helical membrane passes run 47–67 (NIVATATGIITFLAHEIIYFS), 105–125 (YILLIHFVVELPLIVLFHPMM), and 132–152 (FTIPFPDLRTLTAQIIIFFLL). A Fatty acid hydroxylase domain is found at 147 to 283 (IIFFLLEDTY…FRHWDVLMGT (137 aa)). The short motif at 161-165 (HRAMH) is the Histidine box-1 element. The Histidine box-2 signature appears at 174-178 (HRIHH). The helical transmembrane segment at 193 to 213 (PWETLLLGLGTIGPPLLLALM) threads the bilayer. Positions 258 to 264 (WHDDHHR) match the Histidine box-3 motif. N-linked (GlcNAc...) asparagine glycosylation is present at Asn269.

Belongs to the sterol desaturase family. Requires Fe cation as cofactor.

The protein resides in the endoplasmic reticulum membrane. Its pathway is steroid metabolism; ergosterol biosynthesis. Its function is as follows. Sterol-C4-methyl oxidase; part of the third module of ergosterol biosynthesis pathway that includes the late steps of the pathway. Erg25A is a catalytic component of the C-4 demethylation complex that catalyzes the conversion of 4,4-dimethylfecosterol into fecosterol via 4-methylfecosterol. The third module or late pathway involves the ergosterol synthesis itself through consecutive reactions that mainly occur in the endoplasmic reticulum (ER) membrane. Firstly, the squalene synthase erg9 catalyzes the condensation of 2 farnesyl pyrophosphate moieties to form squalene, which is the precursor of all steroids. Squalene synthase is crucial for balancing the incorporation of farnesyl diphosphate (FPP) into sterol and nonsterol isoprene synthesis. Secondly, squalene is converted into lanosterol by the consecutive action of the squalene epoxidase erg1 and the lanosterol synthase erg7. Then, the delta(24)-sterol C-methyltransferase erg6 methylates lanosterol at C-24 to produce eburicol. Eburicol is the substrate of the sterol 14-alpha demethylase encoded by cyp51A and cyp51B, to yield 4,4,24-trimethyl ergosta-8,14,24(28)-trienol. The C-14 reductase erg24 then reduces the C14=C15 double bond which leads to 4,4-dimethylfecosterol. A sequence of further demethylations at C-4, involving the C-4 demethylation complex containing the C-4 methylsterol oxidases erg25A or erg25B, the sterol-4-alpha-carboxylate 3-dehydrogenase erg26 and the 3-keto-steroid reductase erg27, leads to the production of fecosterol via 4-methylfecosterol. The C-8 sterol isomerase erg2 then catalyzes the reaction which results in unsaturation at C-7 in the B ring of sterols and thus converts fecosterol to episterol. The sterol-C5-desaturase erg3B then catalyzes the introduction of a C-5 double bond in the B ring to produce 5-dehydroepisterol. The 2 other sterol-C5-desaturases, erg3A and erg3C, seem to be less important in ergosterol biosynthesis. The C-22 sterol desaturase erg5 further converts 5-dehydroepisterol into ergosta-5,7,22,24(28)-tetraen-3beta-ol by forming the C-22(23) double bond in the sterol side chain. Finally, ergosta-5,7,22,24(28)-tetraen-3beta-ol is substrate of the C-24(28) sterol reductases erg4A and erg4B to produce ergosterol. Possible alternative sterol biosynthetic pathways might exist from fecosterol to ergosterol, depending on the activities of the erg3 isoforms. The protein is Methylsterol monooxygenase erg25A of Aspergillus fumigatus (strain ATCC MYA-4609 / CBS 101355 / FGSC A1100 / Af293) (Neosartorya fumigata).